Reading from the N-terminus, the 403-residue chain is Glucose-signaling factor 2 (403 aa).

The Lumenal segment spans residues 1 to 177 (MEIYIRLNAD…QEVQANYSSL (177 aa)). N-linked (GlcNAc...) asparagine glycosylation is found at Asn89 and Asn173. The chain crosses the membrane as a helical; Signal-anchor for type II membrane protein span at residues 178-198 (VAQWLFFVMHIFKVGIITLFL). The Cytoplasmic portion of the chain corresponds to 199-403 (KLGIANPISF…IKKNDLKKSN (205 aa)). Residues 330–388 (ELENNLKKILEEYDGDIGKMNAEIRRFRRFGIYEPDEKLASLVKLRREIADEKEKASNN) are a coiled coil.

Its subcellular location is the endoplasmic reticulum membrane. In terms of biological role, may be involved in the secretion of hexose transporters from the endoplasmic reticulum. Involved in secretion of GAL2 and HXT1. In Saccharomyces cerevisiae (strain ATCC 204508 / S288c) (Baker's yeast), this protein is Glucose-signaling factor 2 (GSF2).